We begin with the raw amino-acid sequence, 345 residues long: MPARALLPRRMGHRTLASTPALWASIPCPRSELRLDLVLPSGQSFRWREQSPAHWSGVLADQVWTLTQTEEQLHCTVYRGDKSQASRPTPDELEAVRKYFQLDVTLAQLYHHWGSVDSHFQEVAQKFQGVRLLRQDPIECLFSFICSSNNNIARITGMVERLCQAFGPRLIQLDDVTYHGFPSLQALAGPEVEAHLRKLGLGYRARYVSASARAILEEQGGLAWLQQLRESSYEEAHKALCILPGVGTKVADCICLMALDKPQAVPVDVHMWHIAQRDYSWHPTTSQAKGPSPQTNKELGNFFRSLWGPYAGWAQAVLFSADLRQSRHAQEPPAKRRKGSKGPEG.

DNA is bound by residues N149, R154, and R204. Residue K249 is the Schiff-base intermediate with DNA of the active site. P266 and D268 together coordinate 8-oxoguanine. Residues H270 and Q287 each contribute to the DNA site. The 8-oxoguanine site is built by Q315 and F319. Residues 324–334 (RQSRHAQEPPA) show a composition bias toward basic and acidic residues. The interval 324 to 345 (RQSRHAQEPPAKRRKGSKGPEG) is disordered. Residues 335–345 (KRRKGSKGPEG) show a composition bias toward basic residues.

This sequence belongs to the type-1 OGG1 family. In terms of tissue distribution, ubiquitous.

The protein localises to the nucleus. It is found in the nucleoplasm. The protein resides in the nucleus speckle. It localises to the nucleus matrix. Its subcellular location is the mitochondrion. The enzyme catalyses 2'-deoxyribonucleotide-(2'-deoxyribose 5'-phosphate)-2'-deoxyribonucleotide-DNA = a 3'-end 2'-deoxyribonucleotide-(2,3-dehydro-2,3-deoxyribose 5'-phosphate)-DNA + a 5'-end 5'-phospho-2'-deoxyribonucleoside-DNA + H(+). DNA repair enzyme that incises DNA at 8-oxoG residues. Excises 7,8-dihydro-8-oxoguanine and 2,6-diamino-4-hydroxy-5-N-methylformamidopyrimidine (FAPY) from damaged DNA. Has a beta-lyase activity that nicks DNA 3' to the lesion. The protein is N-glycosylase/DNA lyase (OGG1) of Homo sapiens (Human).